Reading from the N-terminus, the 681-residue chain is Glycogen-binding subunit 76A (681 aa).

Disordered stretches follow at residues 1–20, 53–94, 232–251, 285–391, and 405–435; these read MNDP…SRPP, LGSQ…DLQP, SLTE…NGHL, FADR…ASNL, and QDAT…CRPQ. The segment covering 59 to 69 has biased composition (acidic residues); it reads EEGEGNAEDEP. Polar residues predominate over residues 72 to 91; it reads NGTSTNTWVNSHDSEQTVTD. Basic and acidic residues-rich tracts occupy residues 237–251, 297–308, and 321–336; these read EQTK…NGHL, RVQKESSQERVP, and PSDR…RVQE. Residues 353-364 show a composition bias toward polar residues; sequence TESISTEVTTLE. Residues 365–374 are compositionally biased toward basic and acidic residues; the sequence is RSPEESRNDE. In terms of domain architecture, CBM21 spans 525 to 632; sequence AVREKQVSLE…NNYGANYCFQ (108 aa). Threonine 545 carries the phosphothreonine modification. Phosphoserine occurs at positions 547 and 549.

This Drosophila melanogaster (Fruit fly) protein is Glycogen-binding subunit 76A (Gbs-76A).